Consider the following 679-residue polypeptide: Methionine--tRNA ligase (679 aa).

Positions 15–25 (PYANGPVHIGH) match the 'HIGH' region motif. Residues Cys147, Cys150, Cys160, and Cys163 each coordinate Zn(2+). Residues 332-336 (KISTS) carry the 'KMSKS' region motif. An ATP-binding site is contributed by Thr335. Positions 578-679 (DFMKLDIRVG…KEVKPGSEVK (102 aa)) constitute a tRNA-binding domain.

The protein belongs to the class-I aminoacyl-tRNA synthetase family. MetG type 1 subfamily. Homodimer. It depends on Zn(2+) as a cofactor.

It localises to the cytoplasm. It catalyses the reaction tRNA(Met) + L-methionine + ATP = L-methionyl-tRNA(Met) + AMP + diphosphate. Functionally, is required not only for elongation of protein synthesis but also for the initiation of all mRNA translation through initiator tRNA(fMet) aminoacylation. This Parabacteroides distasonis (strain ATCC 8503 / DSM 20701 / CIP 104284 / JCM 5825 / NCTC 11152) protein is Methionine--tRNA ligase.